We begin with the raw amino-acid sequence, 421 residues long: Dihydroorotase (421 aa).

Zn(2+) is bound by residues H59 and H61. Residues 61 to 63 (HLR) and N93 each bind substrate. Positions 150, 177, and 230 each coordinate Zn(2+). N276 lines the substrate pocket. D303 serves as a coordination point for Zn(2+). Residue D303 is part of the active site. Position 307 (H307) interacts with substrate.

Belongs to the metallo-dependent hydrolases superfamily. DHOase family. Class I DHOase subfamily. Requires Zn(2+) as cofactor.

It catalyses the reaction (S)-dihydroorotate + H2O = N-carbamoyl-L-aspartate + H(+). It functions in the pathway pyrimidine metabolism; UMP biosynthesis via de novo pathway; (S)-dihydroorotate from bicarbonate: step 3/3. Functionally, catalyzes the reversible cyclization of carbamoyl aspartate to dihydroorotate. The chain is Dihydroorotase from Desulfotalea psychrophila (strain LSv54 / DSM 12343).